Here is a 225-residue protein sequence, read N- to C-terminus: ATP-dependent Clp protease proteolytic subunit (225 aa).

The active-site Nucleophile is Ser101. Residue His126 is part of the active site.

This sequence belongs to the peptidase S14 family. In terms of assembly, component of the chloroplastic Clp protease core complex.

The protein localises to the plastid. Its subcellular location is the chloroplast stroma. It carries out the reaction Hydrolysis of proteins to small peptides in the presence of ATP and magnesium. alpha-casein is the usual test substrate. In the absence of ATP, only oligopeptides shorter than five residues are hydrolyzed (such as succinyl-Leu-Tyr-|-NHMec, and Leu-Tyr-Leu-|-Tyr-Trp, in which cleavage of the -Tyr-|-Leu- and -Tyr-|-Trp bonds also occurs).. Cleaves peptides in various proteins in a process that requires ATP hydrolysis. Has a chymotrypsin-like activity. Plays a major role in the degradation of misfolded proteins. This Chlorokybus atmophyticus (Soil alga) protein is ATP-dependent Clp protease proteolytic subunit.